A 345-amino-acid polypeptide reads, in one-letter code: Aspartate--ammonia ligase (345 aa).

Belongs to the class-II aminoacyl-tRNA synthetase family. AsnA subfamily.

The protein localises to the cytoplasm. It carries out the reaction L-aspartate + NH4(+) + ATP = L-asparagine + AMP + diphosphate + H(+). It functions in the pathway amino-acid biosynthesis; L-asparagine biosynthesis; L-asparagine from L-aspartate (ammonia route): step 1/1. In Parabacteroides distasonis (strain ATCC 8503 / DSM 20701 / CIP 104284 / JCM 5825 / NCTC 11152), this protein is Aspartate--ammonia ligase.